The following is a 290-amino-acid chain: Probable transcriptional regulatory protein HAH1 (290 aa).

The protein belongs to the TACO1 family.

It is found in the mitochondrion. This Saccharomyces cerevisiae (strain ATCC 204508 / S288c) (Baker's yeast) protein is Probable transcriptional regulatory protein HAH1.